A 176-amino-acid polypeptide reads, in one-letter code: Peptide methionine sulfoxide reductase MsrA (176 aa).

Cys-10 is a catalytic residue.

It belongs to the MsrA Met sulfoxide reductase family.

The catalysed reaction is L-methionyl-[protein] + [thioredoxin]-disulfide + H2O = L-methionyl-(S)-S-oxide-[protein] + [thioredoxin]-dithiol. It carries out the reaction [thioredoxin]-disulfide + L-methionine + H2O = L-methionine (S)-S-oxide + [thioredoxin]-dithiol. In terms of biological role, has an important function as a repair enzyme for proteins that have been inactivated by oxidation. Catalyzes the reversible oxidation-reduction of methionine sulfoxide in proteins to methionine. This is Peptide methionine sulfoxide reductase MsrA from Sulfolobus acidocaldarius (strain ATCC 33909 / DSM 639 / JCM 8929 / NBRC 15157 / NCIMB 11770).